The chain runs to 810 residues: Janus kinase and microtubule-interacting protein 2 (810 aa).

Coiled-coil stretches lie at residues 13–102 (EALI…EMSR), 148–178 (ERLK…QADK), and 207–244 (RRLM…KEAL). Basic and acidic residues predominate over residues 261–274 (PKREIPGRAGDGSE). 2 disordered regions span residues 261 to 280 (PKRE…SSPD) and 437 to 465 (YDED…DDDL). Positions 280-419 (DLRRNQKRIA…REKLIRRRKH (140 aa)) form a coiled coil. Coiled-coil stretches lie at residues 468-597 (SLAA…RERR) and 664-808 (EKWI…SNRK).

Belongs to the JAKMIP family. Highly expressed in brain, moderately expressed in thymus, spleen and lung, and weakly expressed in kidney, liver and peripheral blood lymphocytes. Also expressed in adrenal and pituitary glands, as well as testis.

The protein localises to the golgi apparatus. The sequence is that of Janus kinase and microtubule-interacting protein 2 (JAKMIP2) from Homo sapiens (Human).